The chain runs to 308 residues: 2-methylisocitrate lyase (308 aa).

54 to 56 is a binding site for substrate; the sequence is SGG. Mg(2+)-binding residues include Asp94 and Asp96. Substrate contacts are provided by residues 131-132, Arg166, Glu196, 224-226, Arg255, and Arg284; these read CG and NIT.

The protein belongs to the isocitrate lyase/PEP mutase superfamily. Methylisocitrate lyase family. Homotetramer; dimer of dimers. Mg(2+) serves as cofactor.

It carries out the reaction (2S,3R)-3-hydroxybutane-1,2,3-tricarboxylate = pyruvate + succinate. It participates in organic acid metabolism; propanoate degradation. In terms of biological role, involved in the catabolism of short chain fatty acids (SCFA) via the 2-methylcitrate cycle I (propionate degradation route). Catalyzes the thermodynamically favored C-C bond cleavage reaction of (2R,3S)-2-methylisocitrate to yield pyruvate and succinate via an alpha-carboxy-carbanion intermediate. This is 2-methylisocitrate lyase from Vibrio cholerae serotype O1 (strain ATCC 39315 / El Tor Inaba N16961).